Reading from the N-terminus, the 463-residue chain is 23S rRNA (uracil(1939)-C(5))-methyltransferase RlmD (463 aa).

The TRAM domain maps to 14 to 78 (AVAPGSDPVV…PSYEQAHLLE (65 aa)). The [4Fe-4S] cluster site is built by Cys-91, Cys-97, Cys-100, and Cys-179. S-adenosyl-L-methionine-binding residues include Gln-287, Phe-316, Asn-321, Glu-337, Asn-365, and Asp-386. The active-site Nucleophile is Cys-419.

This sequence belongs to the class I-like SAM-binding methyltransferase superfamily. RNA M5U methyltransferase family. RlmD subfamily.

The catalysed reaction is uridine(1939) in 23S rRNA + S-adenosyl-L-methionine = 5-methyluridine(1939) in 23S rRNA + S-adenosyl-L-homocysteine + H(+). In terms of biological role, catalyzes the formation of 5-methyl-uridine at position 1939 (m5U1939) in 23S rRNA. This Cupriavidus pinatubonensis (strain JMP 134 / LMG 1197) (Cupriavidus necator (strain JMP 134)) protein is 23S rRNA (uracil(1939)-C(5))-methyltransferase RlmD.